The following is a 422-amino-acid chain: 2-oxoglutarate and iron-dependent oxygenase JMJD4 (422 aa).

Residues 139-298 (QRNFPEHNIY…IMWQFLQDEL (160 aa)) form the JmjC domain. Fe cation contacts are provided by His-186, Asp-188, and His-266.

It belongs to the JMJD6 family. It depends on Fe(2+) as a cofactor.

It localises to the cytoplasm. It carries out the reaction L-lysyl-[protein] + 2-oxoglutarate + O2 = 4-hydroxy-L-lysyl-[protein] + succinate + CO2. Functionally, catalyzes the 2-oxoglutarate and iron-dependent C4-lysyl hydroxylation of ETF1 at 'Lys-63' thereby promoting the translational termination efficiency of ETF1. The sequence is that of 2-oxoglutarate and iron-dependent oxygenase JMJD4 (jmjd4) from Danio rerio (Zebrafish).